Here is a 462-residue protein sequence, read N- to C-terminus: Exodeoxyribonuclease 7 large subunit (462 aa).

This sequence belongs to the XseA family. As to quaternary structure, heterooligomer composed of large and small subunits.

The protein resides in the cytoplasm. It carries out the reaction Exonucleolytic cleavage in either 5'- to 3'- or 3'- to 5'-direction to yield nucleoside 5'-phosphates.. Its function is as follows. Bidirectionally degrades single-stranded DNA into large acid-insoluble oligonucleotides, which are then degraded further into small acid-soluble oligonucleotides. This chain is Exodeoxyribonuclease 7 large subunit, found in Pectobacterium carotovorum subsp. carotovorum (strain PC1).